The primary structure comprises 1465 residues: DNA polymerase III PolC-type (1465 aa).

The Exonuclease domain occupies 425–581 (YVVFDVETTG…YDAEATGRLL (157 aa)).

Belongs to the DNA polymerase type-C family. PolC subfamily.

It is found in the cytoplasm. The enzyme catalyses DNA(n) + a 2'-deoxyribonucleoside 5'-triphosphate = DNA(n+1) + diphosphate. Required for replicative DNA synthesis. This DNA polymerase also exhibits 3' to 5' exonuclease activity. The sequence is that of DNA polymerase III PolC-type from Streptococcus mutans serotype c (strain ATCC 700610 / UA159).